A 70-amino-acid chain; its full sequence is Sec-independent protein translocase protein TatA (70 aa).

The helical transmembrane segment at 1-21 (MGIGVWELLLLFLIVLVVFGT) threads the bilayer. The segment at 42–70 (MSENEDKPSEGGARTLEGEVVDKKEKDKV) is disordered. Residues 57–70 (LEGEVVDKKEKDKV) are compositionally biased toward basic and acidic residues.

The protein belongs to the TatA/E family. The Tat system comprises two distinct complexes: a TatABC complex, containing multiple copies of TatA, TatB and TatC subunits, and a separate TatA complex, containing only TatA subunits. Substrates initially bind to the TatABC complex, which probably triggers association of the separate TatA complex to form the active translocon.

The protein resides in the cell inner membrane. Functionally, part of the twin-arginine translocation (Tat) system that transports large folded proteins containing a characteristic twin-arginine motif in their signal peptide across membranes. TatA could form the protein-conducting channel of the Tat system. In Methylococcus capsulatus (strain ATCC 33009 / NCIMB 11132 / Bath), this protein is Sec-independent protein translocase protein TatA.